Reading from the N-terminus, the 205-residue chain is Holliday junction branch migration complex subunit RuvA (205 aa).

The domain I stretch occupies residues 1–64 (MIGKLKGLID…EDQIKLFGFR (64 aa)). The tract at residues 65 to 143 (TDHEREWFRL…ALSNVDPAVV (79 aa)) is domain II. The flexible linker stretch occupies residues 144 to 154 (QLSGALDDNRA). Residues 154-205 (APRPVTDAISALVNLGYGQPQAAAAIAAAARAAGDDAATAQLIKLGLKELSK) form a domain III region.

This sequence belongs to the RuvA family. As to quaternary structure, homotetramer. Forms an RuvA(8)-RuvB(12)-Holliday junction (HJ) complex. HJ DNA is sandwiched between 2 RuvA tetramers; dsDNA enters through RuvA and exits via RuvB. An RuvB hexamer assembles on each DNA strand where it exits the tetramer. Each RuvB hexamer is contacted by two RuvA subunits (via domain III) on 2 adjacent RuvB subunits; this complex drives branch migration. In the full resolvosome a probable DNA-RuvA(4)-RuvB(12)-RuvC(2) complex forms which resolves the HJ.

It localises to the cytoplasm. Its function is as follows. The RuvA-RuvB-RuvC complex processes Holliday junction (HJ) DNA during genetic recombination and DNA repair, while the RuvA-RuvB complex plays an important role in the rescue of blocked DNA replication forks via replication fork reversal (RFR). RuvA specifically binds to HJ cruciform DNA, conferring on it an open structure. The RuvB hexamer acts as an ATP-dependent pump, pulling dsDNA into and through the RuvAB complex. HJ branch migration allows RuvC to scan DNA until it finds its consensus sequence, where it cleaves and resolves the cruciform DNA. The sequence is that of Holliday junction branch migration complex subunit RuvA from Rhodopseudomonas palustris (strain BisB5).